The primary structure comprises 342 residues: Selenide, water dikinase (342 aa).

Residue cysteine 13 is part of the active site. ATP is bound by residues lysine 16 and 44-46; that span reads SCD. Position 47 (aspartate 47) interacts with Mg(2+). ATP is bound by residues aspartate 64, aspartate 87, and 134–136; that span reads GHS. Position 87 (aspartate 87) interacts with Mg(2+). Position 222 (aspartate 222) interacts with Mg(2+).

It belongs to the selenophosphate synthase 1 family. Class I subfamily. As to quaternary structure, homodimer. Mg(2+) is required as a cofactor.

It carries out the reaction hydrogenselenide + ATP + H2O = selenophosphate + AMP + phosphate + 2 H(+). Synthesizes selenophosphate from selenide and ATP. This is Selenide, water dikinase from Agathobacter rectalis (strain ATCC 33656 / DSM 3377 / JCM 17463 / KCTC 5835 / VPI 0990) (Eubacterium rectale).